The primary structure comprises 75 residues: Protein myomixer (75 aa).

Topologically, residues 1 to 5 (MPAVF) are cytoplasmic. The chain crosses the membrane as a helical span at residues 6 to 28 (LLLRSLVVRLFGSRLAASGVQLL). Residues 29-75 (RRILTTATGHLGTVLRNIWERISSQQSKEAILGCVLCLLNMHKKVDN) lie on the Extracellular side of the membrane. An AxLyCxL motif is present at residues 58 to 67 (AILGCVLCLL).

The protein belongs to the MYMX family. In terms of tissue distribution, specifically expressed in the developing myotome.

The protein localises to the cell membrane. In terms of biological role, myoblast-specific protein that mediates myoblast fusion, an essential step for the formation of multi-nucleated muscle fibers. Involved in membrane fusion downstream of the lipid mixing step mediated by mymk. Acts by generating membrane stresses via its extracellular C-terminus, leading to drive fusion pore formation. This chain is Protein myomixer, found in Danio rerio (Zebrafish).